Reading from the N-terminus, the 93-residue chain is Alpha-defensin 2 (93 aa).

Residues 1–19 form the signal peptide; it reads MKPLVLLSALVLLSFQVQA. A propeptide spanning residues 20-58 is cleaved from the precursor; it reads DPIQNTDEETKTEEQSGEEDQAVSVSFGDREGASLQEES. A disordered region spans residues 23–49; sequence QNTDEETKTEEQSGEEDQAVSVSFGDR. Cystine bridges form between Cys-64–Cys-92, Cys-66–Cys-81, and Cys-71–Cys-91.

Belongs to the alpha-defensin family. In terms of tissue distribution, paneth cells of the small bowel.

The protein localises to the secreted. Has broad-spectrum antimicrobial properties. Has antibacterial activity against the Gram-positive bacterium L.monocytogenes EGD and the Gram-negative bacteria E.coli ML-35p and avirulent S.typhimurium 7953, but not against the mouse-virulent S.typhimurium 14028S. Probably contributes to the antimicrobial barrier function of the small bowel mucosa. The sequence is that of Alpha-defensin 2 (Defa2) from Mus musculus (Mouse).